The primary structure comprises 112 residues: UPF0102 protein Pmob_0702 (112 aa).

The protein belongs to the UPF0102 family.

This chain is UPF0102 protein Pmob_0702, found in Petrotoga mobilis (strain DSM 10674 / SJ95).